A 548-amino-acid chain; its full sequence is uncharacterized protein (548 aa).

2 short-chain dehydrogenase/reductase regions span residues 1–250 (MDDR…WMSV) and 271–548 (PVED…LLSP). 12–37 (IVVTGAAGGIGRALVDIFAANGDVVV) provides a ligand contact to NADP(+). Ser-141 lines the substrate pocket. Tyr-154 acts as the Proton acceptor in catalysis. 280–304 (VIVMGGATGVGAAIARRFAENGDTV) is an NADP(+) binding site. The active-site Proton acceptor is Tyr-420.

Belongs to the short-chain dehydrogenases/reductases (SDR) family.

This is an uncharacterized protein from Sinorhizobium fredii (strain NBRC 101917 / NGR234).